Consider the following 139-residue polypeptide: MSRGRGAASGTKYRMTLGLPVQAIMNCADNSGAKNLYIVSVFGTGARLNRLPAASCGDMVLATVKKGKPDLRKKIMPAIVVRQRKAWRRKDGVYLYFEDNAGVIVNPKGEMKGSAITGPVAKECADLWPRIASNAGTVV.

This sequence belongs to the universal ribosomal protein uL14 family. As to quaternary structure, component of the large ribosomal subunit (LSU). Mature yeast ribosomes consist of a small (40S) and a large (60S) subunit. The 40S small subunit contains 1 molecule of ribosomal RNA (18S rRNA) and at least 33 different proteins. The large 60S subunit contains 3 rRNA molecules (25S, 5.8S and 5S rRNA) and at least 46 different proteins.

Its subcellular location is the cytoplasm. The protein localises to the nucleus. Component of the ribosome, a large ribonucleoprotein complex responsible for the synthesis of proteins in the cell. The small ribosomal subunit (SSU) binds messenger RNAs (mRNAs) and translates the encoded message by selecting cognate aminoacyl-transfer RNA (tRNA) molecules. The large subunit (LSU) contains the ribosomal catalytic site termed the peptidyl transferase center (PTC), which catalyzes the formation of peptide bonds, thereby polymerizing the amino acids delivered by tRNAs into a polypeptide chain. The nascent polypeptides leave the ribosome through a tunnel in the LSU and interact with protein factors that function in enzymatic processing, targeting, and the membrane insertion of nascent chains at the exit of the ribosomal tunnel. The polypeptide is Large ribosomal subunit protein uL14A (rpl2301) (Schizosaccharomyces pombe (strain 972 / ATCC 24843) (Fission yeast)).